Here is a 172-residue protein sequence, read N- to C-terminus: C-phycocyanin beta chain (172 aa).

N4-methylasparagine is present on Asn72. (2R,3E)-phycocyanobilin contacts are provided by Cys82 and Cys153.

The protein belongs to the phycobiliprotein family. In terms of assembly, heterodimer of an alpha and a beta subunit, which further assembles into trimers and the trimers into hexamers. The basic functional unit of phycobiliproteins is a ring-shaped hexamer formed from two back-to-back trimers contacting via the alpha chain subunits. The trimers are composed of alpha/beta subunit heterodimers arranged around a three-fold axis of symmetry. The phycoerythrins also contain a gamma subunit which is located in the center of the hexamer. Contains two covalently linked bilin chromophores.

The protein resides in the plastid. The protein localises to the chloroplast thylakoid membrane. Light-harvesting photosynthetic bile pigment-protein from the phycobiliprotein complex (phycobilisome, PBS). Phycocyanin is the major phycobiliprotein in the PBS rod. This is C-phycocyanin beta chain (cpcB) from Pyropia yezoensis (Susabi-nori).